Reading from the N-terminus, the 205-residue chain is MLTLALPKGRLAEESIDLMISKGWLSAKPDPDSKELIYNDPLGKIRILLVRSQDVATYVEQCAADAGISGWDVLKEGGYDLATPLDLGIGKCRLSLAAPEGYTLEARHRKIRVATKYPNLAREFFFHKGLSCEIFKLYGSIELAPLVGLSDCIVDLVSTGGTLKANGLKELNIILESSARLVFNRSSLYGKRKEAAEFMDSLSKI.

The protein belongs to the ATP phosphoribosyltransferase family. Short subfamily. As to quaternary structure, heteromultimer composed of HisG and HisZ subunits.

The protein resides in the cytoplasm. It carries out the reaction 1-(5-phospho-beta-D-ribosyl)-ATP + diphosphate = 5-phospho-alpha-D-ribose 1-diphosphate + ATP. It participates in amino-acid biosynthesis; L-histidine biosynthesis; L-histidine from 5-phospho-alpha-D-ribose 1-diphosphate: step 1/9. In terms of biological role, catalyzes the condensation of ATP and 5-phosphoribose 1-diphosphate to form N'-(5'-phosphoribosyl)-ATP (PR-ATP). Has a crucial role in the pathway because the rate of histidine biosynthesis seems to be controlled primarily by regulation of HisG enzymatic activity. In Leptospira borgpetersenii serovar Hardjo-bovis (strain JB197), this protein is ATP phosphoribosyltransferase.